A 65-amino-acid polypeptide reads, in one-letter code: Peptide ToAcP (65 aa).

Positions 1 to 24 (MKMKMIVVISILLIVFSLSSKAMS) are cleaved as a signal peptide. The propeptide occupies 25–34 (LEDEQESVQR). Alanine 58 is modified (alanine amide). Positions 59-65 (GRFDPAV) are excised as a propeptide.

As to expression, expressed by the venom gland.

The protein localises to the secreted. In terms of biological role, helical wheel projections predict no hydrophobic face, suggesting a non-amphipathic peptide. Does not show antifungal activity. The sequence is that of Peptide ToAcP from Tityus obscurus (Amazonian scorpion).